Reading from the N-terminus, the 311-residue chain is Malate dehydrogenase (311 aa).

Residues G7 to G13 and D34 contribute to the NAD(+) site. Residues R81 and R87 each coordinate substrate. NAD(+) contacts are provided by residues N94 and I117 to N119. Residues N119 and R153 each coordinate substrate. The active-site Proton acceptor is H177. Residue M227 participates in NAD(+) binding.

Belongs to the LDH/MDH superfamily. MDH type 1 family. Homodimer.

The enzyme catalyses (S)-malate + NAD(+) = oxaloacetate + NADH + H(+). Functionally, catalyzes the reversible oxidation of malate to oxaloacetate. The chain is Malate dehydrogenase from Histophilus somni (strain 129Pt) (Haemophilus somnus).